Here is a 264-residue protein sequence, read N- to C-terminus: Catechol O-methyltransferase B (264 aa).

An N-terminal signal peptide occupies residues 1–29 (MLGVLLCWCLGASVLLYVLYSWLIPAAVQ). N-linked (GlcNAc...) asparagine glycosylation occurs at asparagine 31. The S-adenosyl-L-methionine site is built by valine 92, serine 122, glutamate 140, and aspartate 191. A Mg(2+)-binding site is contributed by aspartate 191. Lysine 194 is a substrate binding site. Aspartate 219 and asparagine 220 together coordinate Mg(2+). Asparagine 220 and glutamate 249 together coordinate substrate.

Belongs to the class I-like SAM-binding methyltransferase superfamily. Cation-dependent O-methyltransferase family. The cofactor is Mg(2+). Strongly expressed in eye, diencephalon, spinal cord, hindbrain, liver, kidney and telencephalon. Also detected at very low levels in muscle, spleen, anterior gut and heart. In eye, expressed strongly in retina. In brain, expressed in the central part of the telencephalon, the periventricular gray zone of the optic tectum, the periglomerular nucleus, the olfactory bulb, and the region adjacent to the diencephalic ventricle in the hypothalamus. Expressed in gill, with strongest expression in gill filaments nearest the gill arch, and in esophageal epithelium.

The protein resides in the secreted. The enzyme catalyses a catechol + S-adenosyl-L-methionine = a guaiacol + S-adenosyl-L-homocysteine + H(+). In terms of biological role, catalyzes the O-methylation, and thereby the inactivation, of catecholamine neurotransmitters and catechol hormones. This is Catechol O-methyltransferase B from Danio rerio (Zebrafish).